A 247-amino-acid chain; its full sequence is uncharacterized protein (247 aa).

Residues 1–35 form the signal peptide; sequence MWGPGVTAEGLSVAPAPPPLLPLLLLLALALVAPS. Residues 82–102 traverse the membrane as a helical segment; sequence LSGLLILLVLFAIGYFLQRII. A disordered region spans residues 109 to 176; the sequence is YPRGQARPGQ…RGSGGRLPPS (68 aa). Residues 111–120 are compositionally biased toward low complexity; the sequence is RGQARPGQAR. Gly residues predominate over residues 161–171; it reads SGGGRGRGSGG.

The protein resides in the membrane. This is an uncharacterized protein from Mus musculus (Mouse).